The sequence spans 65 residues: Large ribosomal subunit protein uL29 (65 aa).

Belongs to the universal ribosomal protein uL29 family.

The chain is Large ribosomal subunit protein uL29 from Syntrophus aciditrophicus (strain SB).